A 601-amino-acid polypeptide reads, in one-letter code: CDPK-related kinase 5 (601 aa).

Positions 1-19 (MGLCTSKPNSSNSDQTPAR) are enriched in polar residues. Disordered stretches follow at residues 1–55 (MGLC…KSPF) and 70–98 (KKTP…PPPS). Residue Gly-2 is the site of N-myristoyl glycine attachment. The segment covering 26-35 (SESVKPSSSS) has biased composition (low complexity). The span at 36-48 (VNGEDQCVTTTNN) shows a compositional bias: polar residues. The Protein kinase domain occupies 148-410 (YELGDEVGRG…AAQALSHPWI (263 aa)). ATP-binding positions include 154–162 (VGRGHFGYT) and Lys-180. The Proton acceptor role is filled by Asp-276. The residue at position 316 (Ser-316) is a Phosphoserine. An autoinhibitory domain region spans residues 415-445 (DAKVPMDILVFKLMRAYLRSSSLRKAALRAL). The calmodulin binding (CaMBD) stretch occupies residues 434–454 (SSSLRKAALRALSKTLTVDEL). EF-hand domains follow at residues 452–488 (DELF…ATDA), 489–524 (MKDS…VHQL), 525–564 (EALD…GPSV), and 567–596 (HAVL…VSSR). Residues Ser-467, Asn-469, Thr-471, Asn-476, Arg-508, Glu-513, Asn-546, Glu-553, Asp-578, and Lys-580 each contribute to the Ca(2+) site. Position 582 is a phosphoserine (Ser-582).

This sequence belongs to the protein kinase superfamily. Ser/Thr protein kinase family. CDPK subfamily. Binds calmodulin (CaM) in a calcium-dependent manner.

Its subcellular location is the membrane. The enzyme catalyses L-seryl-[protein] + ATP = O-phospho-L-seryl-[protein] + ADP + H(+). The catalysed reaction is L-threonyl-[protein] + ATP = O-phospho-L-threonyl-[protein] + ADP + H(+). Its activity is regulated as follows. Activated by calcium and calmodulin. Autophosphorylation may play an important role in the regulation of the kinase activity. May play a role in signal transduction pathways that involve calcium as a second messenger. This chain is CDPK-related kinase 5 (CRK5), found in Arabidopsis thaliana (Mouse-ear cress).